Consider the following 256-residue polypeptide: Omega-amidase YafV (256 aa).

One can recognise a CN hydrolase domain in the interval 4 to 234 (LKLTLLQQPL…AAQLDAELSL (231 aa)). Glu-42 serves as the catalytic Proton acceptor. Lys-107 is an active-site residue. Residue Cys-141 is the Nucleophile of the active site.

Belongs to the carbon-nitrogen hydrolase superfamily. NIT1/NIT2 family.

The catalysed reaction is a monoamide of a dicarboxylate + H2O = a dicarboxylate + NH4(+). Its function is as follows. Hydrolyzes alpha-ketoglutaramate (a-KGM) to alpha-ketoglutarate (alpha-KG) and ammonia (specific activity 21 umol/min/mg), has very weak activity on L-glutamine, and no activity on deaminated glutathione (dGSH) or glutathione. May function as a metabolite repair enzyme. This Yersinia enterocolitica protein is Omega-amidase YafV.